The chain runs to 164 residues: C-type lectin 1 (164 aa).

The first 23 residues, 1-23 (MGRFLFASLGLLVVAFSLSGTGA), serve as a signal peptide directing secretion. 3 cysteine pairs are disulfide-bonded: C27/C38, C55/C154, and C129/C146. The C-type lectin domain occupies 34 to 155 (YNVSCYKLFY…CTLLHPFLCQ (122 aa)). 2 N-linked (GlcNAc...) asparagine glycosylation sites follow: N35 and N109. Residues 119–121 (EPN) carry the Mannose-binding motif. Positions 127, 142, and 143 each coordinate Ca(2+).

The protein belongs to the true venom lectin family. Expressed by the venom gland.

The protein localises to the secreted. Its function is as follows. Mannose-binding lectin which recognizes specific carbohydrate structures and agglutinates a variety of animal cells by binding to cell-surface glycoproteins and glycolipids. May be a calcium-dependent lectin. The sequence is that of C-type lectin 1 from Hydrophis hardwickii (Hardwick's spine-bellied seasnake).